Reading from the N-terminus, the 371-residue chain is Glutamate 5-kinase (371 aa).

Residue Lys-11 participates in ATP binding. 3 residues coordinate substrate: Ser-52, Asp-139, and Asn-151. ATP contacts are provided by residues 171-172 (TD) and 213-219 (TGGMATK). One can recognise a PUA domain in the interval 278–356 (EGSLTLDEGA…AEIPYILGYE (79 aa)).

The protein belongs to the glutamate 5-kinase family.

It is found in the cytoplasm. It catalyses the reaction L-glutamate + ATP = L-glutamyl 5-phosphate + ADP. It participates in amino-acid biosynthesis; L-proline biosynthesis; L-glutamate 5-semialdehyde from L-glutamate: step 1/2. Functionally, catalyzes the transfer of a phosphate group to glutamate to form L-glutamate 5-phosphate. This is Glutamate 5-kinase from Synechococcus sp. (strain JA-3-3Ab) (Cyanobacteria bacterium Yellowstone A-Prime).